The chain runs to 604 residues: Aspartate--tRNA(Asp/Asn) ligase (604 aa).

L-aspartate is bound at residue glutamate 187. The tract at residues 211 to 214 (QQFK) is aspartate. L-aspartate-binding residues include arginine 233 and histidine 461. 233 to 235 (RDE) serves as a coordination point for ATP. An ATP-binding site is contributed by glutamate 495. L-aspartate is bound at residue arginine 502. 547–550 (GLDR) provides a ligand contact to ATP.

It belongs to the class-II aminoacyl-tRNA synthetase family. Type 1 subfamily. In terms of assembly, homodimer.

Its subcellular location is the cytoplasm. It catalyses the reaction tRNA(Asx) + L-aspartate + ATP = L-aspartyl-tRNA(Asx) + AMP + diphosphate. Aspartyl-tRNA synthetase with relaxed tRNA specificity since it is able to aspartylate not only its cognate tRNA(Asp) but also tRNA(Asn). Reaction proceeds in two steps: L-aspartate is first activated by ATP to form Asp-AMP and then transferred to the acceptor end of tRNA(Asp/Asn). This is Aspartate--tRNA(Asp/Asn) ligase from Chlorobium luteolum (strain DSM 273 / BCRC 81028 / 2530) (Pelodictyon luteolum).